A 461-amino-acid polypeptide reads, in one-letter code: ATP synthase subunit beta (461 aa).

151–158 (GGAGVGKT) is a binding site for ATP.

Belongs to the ATPase alpha/beta chains family. F-type ATPases have 2 components, CF(1) - the catalytic core - and CF(0) - the membrane proton channel. CF(1) has five subunits: alpha(3), beta(3), gamma(1), delta(1), epsilon(1). CF(0) has three main subunits: a(1), b(2) and c(9-12). The alpha and beta chains form an alternating ring which encloses part of the gamma chain. CF(1) is attached to CF(0) by a central stalk formed by the gamma and epsilon chains, while a peripheral stalk is formed by the delta and b chains.

It localises to the cell inner membrane. It catalyses the reaction ATP + H2O + 4 H(+)(in) = ADP + phosphate + 5 H(+)(out). Produces ATP from ADP in the presence of a proton gradient across the membrane. The catalytic sites are hosted primarily by the beta subunits. The polypeptide is ATP synthase subunit beta (Coxiella burnetii (strain RSA 331 / Henzerling II)).